Reading from the N-terminus, the 575-residue chain is Triokinase/FMN cyclase (575 aa).

One can recognise a DhaK domain in the interval 9 to 336 (SVAGCADDAL…IDAETTAAAW (328 aa)). Residues 56–59 (GSGH), K109, and D114 each bind dihydroxyacetone. The active-site Tele-hemiaminal-histidine intermediate is H221. Positions 348–367 (KRSRVAPAEPQEAPDSTAAG) are disordered. Position 350 is a phosphoserine (S350). The DhaL domain maps to 372 to 571 (KRMALVLERV…AAAILRAILE (200 aa)). ATP contacts are provided by residues 401 to 404 (DGDC), 446 to 447 (SS), G486, and 494 to 495 (TM). A phosphoserine mark is found at S511 and S545. 556-558 (DPG) contacts ATP.

The protein belongs to the dihydroxyacetone kinase (DAK) family. In terms of assembly, homodimer. Interacts with IFIH1 (via the CARD domains), the interaction is inhibited by viral infection. Requires Mg(2+) as cofactor. The cofactor is Mn(2+). Co(2+) serves as cofactor. In terms of tissue distribution, detected in erythrocytes (at protein level).

The catalysed reaction is dihydroxyacetone + ATP = dihydroxyacetone phosphate + ADP + H(+). The enzyme catalyses D-glyceraldehyde + ATP = D-glyceraldehyde 3-phosphate + ADP + H(+). It catalyses the reaction FAD = riboflavin cyclic-4',5'-phosphate + AMP + H(+). Each activity is inhibited by the substrate(s) of the other. Catalyzes both the phosphorylation of dihydroxyacetone and of glyceraldehyde, and the splitting of ribonucleoside diphosphate-X compounds among which FAD is the best substrate. Represses IFIH1-mediated cellular antiviral response. This is Triokinase/FMN cyclase from Homo sapiens (Human).